A 212-amino-acid chain; its full sequence is Pyridoxine/pyridoxamine 5'-phosphate oxidase (212 aa).

Residues 7–10 (RREY) and K65 each bind substrate. FMN-binding positions include 60–65 (RIVLLK), 75–76 (FT), R81, K82, and Q104. Residues Y122, R126, and S130 each coordinate substrate. FMN is bound by residues 139–140 (QS) and W184. Residue 190–192 (RLH) participates in substrate binding. FMN is bound at residue R194.

This sequence belongs to the pyridoxamine 5'-phosphate oxidase family. In terms of assembly, homodimer. The cofactor is FMN.

The catalysed reaction is pyridoxamine 5'-phosphate + O2 + H2O = pyridoxal 5'-phosphate + H2O2 + NH4(+). It catalyses the reaction pyridoxine 5'-phosphate + O2 = pyridoxal 5'-phosphate + H2O2. It participates in cofactor metabolism; pyridoxal 5'-phosphate salvage; pyridoxal 5'-phosphate from pyridoxamine 5'-phosphate: step 1/1. It functions in the pathway cofactor metabolism; pyridoxal 5'-phosphate salvage; pyridoxal 5'-phosphate from pyridoxine 5'-phosphate: step 1/1. Catalyzes the oxidation of either pyridoxine 5'-phosphate (PNP) or pyridoxamine 5'-phosphate (PMP) into pyridoxal 5'-phosphate (PLP). In Pseudoalteromonas translucida (strain TAC 125), this protein is Pyridoxine/pyridoxamine 5'-phosphate oxidase.